The following is a 166-amino-acid chain: Interferon gamma (166 aa).

The signal sequence occupies residues 1-23 (MKYTSYILAFQLCIILGSSSCYS). Gln24 is modified (pyrrolidone carboxylic acid). N-linked (GlcNAc...) asparagine glycosylation is found at Asn39, Asn44, and Asn106.

Belongs to the type II (or gamma) interferon family. As to quaternary structure, homodimer. In terms of tissue distribution, released primarily from activated T lymphocytes.

It localises to the secreted. Its function is as follows. Produced by lymphocytes activated by specific antigens or mitogens. IFN-gamma, in addition to having antiviral activity, has important immunoregulatory functions. It is a potent activator of macrophages, it has antiproliferative effects on transformed cells and it can potentiate the antiviral and antitumor effects of the type I interferons. The polypeptide is Interferon gamma (IFNG) (Marmota monax (Woodchuck)).